Reading from the N-terminus, the 1418-residue chain is Ankyrin repeat and fibronectin type-III domain-containing protein 1 (1418 aa).

Positions 119 to 236 are disordered; the sequence is RDSVCSLPPP…DRGETPSLSE (118 aa). The span at 144–154 shows a compositional bias: polar residues; that stretch reads PENTSINLSQC. Over residues 171 to 186 the composition is skewed to low complexity; that stretch reads SASPTSSTPLRTTSTP. Basic and acidic residues predominate over residues 223–236; sequence LRDHDRGETPSLSE. ANK repeat units lie at residues 419 to 450 and 456 to 485; these read QSSEALFEAVEQQDLDAVQILLFQYTADELDL and EGLTPLDISIMTNNVPIAKLLLKAGGKESP. A Fibronectin type-III domain is found at 556–652; sequence APLMVRLSVT…LSQPPSAVPS (97 aa). Residues 893-900 form a highly conserved peptide sequence region; it reads GLYLGYLK. Disordered stretches follow at residues 1134-1179, 1321-1343, and 1361-1418; these read VQKN…EVFL, LETPLSIPHSPTTSYSLDEYRQP, and KTSP…SSTL. Polar residues predominate over residues 1136–1146; sequence KNDSTSSNTDY. Residues 1407 to 1418 show a composition bias toward polar residues; sequence NEQVSEILSSTL.

Required for vestibular-related functions. The polypeptide is Ankyrin repeat and fibronectin type-III domain-containing protein 1 (ankfn1) (Danio rerio (Zebrafish)).